A 392-amino-acid polypeptide reads, in one-letter code: Enoyl-[acyl-carrier-protein] reductase [NADH] (392 aa).

Residues 48-53 (GCSTGY), 74-75 (FE), 111-112 (DA), and 139-140 (LA) contribute to the NAD(+) site. Position 225 (Tyr-225) interacts with substrate. Tyr-235 functions as the Proton donor in the catalytic mechanism. NAD(+)-binding positions include Lys-244 and 273-275 (LVT).

It belongs to the TER reductase family. As to quaternary structure, monomer.

The catalysed reaction is a 2,3-saturated acyl-[ACP] + NAD(+) = a (2E)-enoyl-[ACP] + NADH + H(+). The protein operates within lipid metabolism; fatty acid biosynthesis. Functionally, involved in the final reduction of the elongation cycle of fatty acid synthesis (FAS II). Catalyzes the reduction of a carbon-carbon double bond in an enoyl moiety that is covalently linked to an acyl carrier protein (ACP). The chain is Enoyl-[acyl-carrier-protein] reductase [NADH] from Idiomarina loihiensis (strain ATCC BAA-735 / DSM 15497 / L2-TR).